The sequence spans 90 residues: Signal recognition particle 19 kDa protein (90 aa).

Belongs to the SRP19 family. As to quaternary structure, part of the signal recognition particle protein translocation system, which is composed of SRP and FtsY. Archaeal SRP consists of a 7S RNA molecule of 300 nucleotides and two protein subunits: SRP54 and SRP19.

The protein resides in the cytoplasm. Functionally, involved in targeting and insertion of nascent membrane proteins into the cytoplasmic membrane. Binds directly to 7S RNA and mediates binding of the 54 kDa subunit of the SRP. The sequence is that of Signal recognition particle 19 kDa protein from Methanococcus aeolicus (strain ATCC BAA-1280 / DSM 17508 / OCM 812 / Nankai-3).